We begin with the raw amino-acid sequence, 479 residues long: Ammonium transporter Rh type C (479 aa).

Residues 1 to 9 (MAWNTNLRW) lie on the Cytoplasmic side of the membrane. Residues 10–30 (RLPLTCLLLQVAMVILFGVFV) traverse the membrane as a helical segment. Over 31–60 (RYDFDADAHWWTERKHKNLSEVENEFYYRY) the chain is Extracellular. A glycan (N-linked (GlcNAc...) asparagine) is linked at Asn48. The chain crosses the membrane as a helical span at residues 61-81 (PSFQDVHVMVFVGFGFLMTFL). Residues 82-85 (QRYG) are Cytoplasmic-facing. The chain crosses the membrane as a helical span at residues 86–106 (FSAVGFNFLLAAFGIQWALLM). Residues 107 to 123 (QGWFHFLEGRYIVVGVE) are Extracellular-facing. Residues 124-144 (NLINADFCVASVCVAFGAVLG) traverse the membrane as a helical segment. Residues 145 to 148 (KVSP) lie on the Cytoplasmic side of the membrane. Residues 149–169 (IQLLIMTFFQVTLFAVNEFIL) traverse the membrane as a helical segment. Residues 170–177 (LNLLKVKD) lie on the Extracellular side of the membrane. The helical transmembrane segment at 178-200 (AGGSMTIHTFYAYFELTVTRILY) threads the bilayer. At 201-218 (RRNLEQSKERQSSAYQSD) the chain is on the cytoplasmic side. Residues 219–239 (LFAMIGTLFLWMYWPSFNSAI) traverse the membrane as a helical segment. Over 240–250 (SYHGDSQHRAA) the chain is Extracellular. The helical transmembrane segment at 251–271 (INTYCSLAACVLTSVAVSSAL) threads the bilayer. Residues 272 to 281 (HKKGKLDMVH) are Cytoplasmic-facing. The chain crosses the membrane as a helical span at residues 282–302 (IQNATLAGGVAVGTTAEMMLM). Position 303 (Pro303) is a topological domain, extracellular. A helical transmembrane segment spans residues 304–324 (YGALIIGFICGIISTLGFVYL). Residues 325 to 345 (TPFLESRLHIQDTCGINNLHG) are Cytoplasmic-facing. The chain crosses the membrane as a helical span at residues 346-366 (IPGIIGGIVGAVTAASASLEV). The Extracellular segment spans residues 367-394 (YGKEGLVHSFDFQDFKRDWTARTQGKFQ). The helical transmembrane segment at 395–415 (IYGLLVTLAMALMGGIIVGLI) threads the bilayer. The Cytoplasmic segment spans residues 416–479 (LRLPFWGQPS…PMASSVPLVP (64 aa)).

Belongs to the ammonium transporter (TC 2.A.49) family. Rh subfamily. In terms of assembly, homotrimer. Post-translationally, N-glycosylated.

It localises to the apical cell membrane. The catalysed reaction is NH4(+)(in) = NH4(+)(out). The enzyme catalyses methylamine(out) = methylamine(in). It catalyses the reaction CO2(out) = CO2(in). Its function is as follows. Ammonium transporter involved in the maintenance of acid-base homeostasis. Transports ammonium and its related derivative methylammonium across the plasma membrane of epithelial cells likely contributing to renal transepithelial ammonia transport and ammonia metabolism. Postulated to primarily mediate an electroneutral bidirectional transport of NH3 ammonia species according to a mechanism that implies interaction of an NH4(+) ion with acidic residues of the pore entry followed by dissociation of NH4(+) into NH3 and H(+). As a result NH3 transits through the central pore and is protonated on the extracellular side reforming NH4(+). May act as a CO2 channel providing for renal acid secretion. This Macaca mulatta (Rhesus macaque) protein is Ammonium transporter Rh type C (RHCG).